The sequence spans 384 residues: Galactokinase (384 aa).

A substrate-binding site is contributed by 34–37 (EHTD). 123–129 (SSGLSSS) is a binding site for ATP. Residues serine 129 and glutamate 161 each coordinate Mg(2+). Aspartate 173 (proton acceptor) is an active-site residue. Residue tyrosine 222 coordinates substrate.

It belongs to the GHMP kinase family. GalK subfamily.

The protein resides in the cytoplasm. The catalysed reaction is alpha-D-galactose + ATP = alpha-D-galactose 1-phosphate + ADP + H(+). It participates in carbohydrate metabolism; galactose metabolism. Its function is as follows. Catalyzes the transfer of the gamma-phosphate of ATP to D-galactose to form alpha-D-galactose-1-phosphate (Gal-1-P). The sequence is that of Galactokinase from Haemophilus influenzae (strain PittGG).